Here is a 178-residue protein sequence, read N- to C-terminus: High mobility group B protein 1 (178 aa).

Composition is skewed to basic and acidic residues over residues 1-52 (MKTA…DPNK) and 101-118 (APYE…EKQM). Disordered regions lie at residues 1–59 (MKTA…APSA) and 75–178 (NPNV…EEED). The HMG box DNA-binding region spans 53-122 (PKRAPSAFFV…EYEKQMDAYN (70 aa)). Phosphoserine is present on residues Ser137 and Ser146. Residues 140–178 (NDEDEASGEEELLEKEAAGDDEEEEEEEDDDDDDDEEED) are compositionally biased toward acidic residues.

This sequence belongs to the HMGB family. Expressed in cotyledons, roots, stems, leaves and flowers (excluding pedicels).

The protein localises to the nucleus. Functionally, binds preferentially double-stranded DNA. Modulates general plant growth and stress tolerance. Confers sensitivity to salt and genotoxic (methyl methanesulfonate, MMS) stresses. The polypeptide is High mobility group B protein 1 (HMGB1) (Arabidopsis thaliana (Mouse-ear cress)).